The primary structure comprises 821 residues: Tip elongation aberrant protein Tea4 (821 aa).

2 stretches are compositionally biased toward polar residues: residues 1–11 (MLHMNSASSAD) and 21–31 (DPTQQNDSTII). The segment at 1-36 (MLHMNSASSADSMEIMESHFDPTQQNDSTIIESRYS) is disordered. A Phosphotyrosine modification is found at Tyr35. Ser36 is subject to Phosphoserine. A Phosphotyrosine modification is found at Tyr40. A disordered region spans residues 51 to 79 (ISGENSEPQTVASQEISDSQEEDTTLTSS). Residues 53-67 (GENSEPQTVASQEIS) are compositionally biased toward polar residues. Residues 130–191 (IDCNFVHAIR…PAEYIETPSE (62 aa)) form the SH3 domain. Disordered stretches follow at residues 267 to 292 (LEIEFSDSSDSSLSAEYRSESEDHVT), 333 to 352 (SSTTADSKNSHSPYSKFSSA), 473 to 500 (DSFDTSNVTQDAPNDVEKEPISGQMPNN), 529 to 570 (SPRL…SSLL), and 664 to 697 (DASSAIPSSSISHDEDLLPRKNTEESTSSSSFSS). Residues 268-282 (EIEFSDSSDSSLSAE) show a composition bias toward low complexity. The span at 283-292 (YRSESEDHVT) shows a compositional bias: basic and acidic residues. Polar residues-rich tracts occupy residues 333–350 (SSTTADSKNSHSPYSKFS) and 473–484 (DSFDTSNVTQDA). Residues 527–821 (LLSPRLYSSS…EMASLLNTNR (295 aa)) are interaction with tea1. The segment covering 529 to 541 (SPRLYSSSTPSSP) has biased composition (low complexity). The span at 554–563 (ENRKQADKVE) shows a compositional bias: basic and acidic residues. An interaction with win1 region spans residues 599–821 (KAFSQSSIDL…EMASLLNTNR (223 aa)). The span at 665 to 674 (ASSAIPSSSI) shows a compositional bias: low complexity. Over residues 675–687 (SHDEDLLPRKNTE) the composition is skewed to basic and acidic residues.

An essential component of the tea1 cell-end complex. Interacts with win1, tea1 and for3. Interacts with tip1 in the presence of tea1.

Its subcellular location is the cytoplasm. The protein localises to the cytoskeleton. Its function is as follows. Cell polarity factor essential for the bipolar localization and function of structures containing the cell-end marker tea1 during the normal cell cycle. Regulates cell polarity in complex with tea1 and together with the stress signaling MAPK cascade, contributes to cell polarity maintenance under stress conditions. Required for the localization of for3 at the cell tip specifically during initiation of bipolar growth. During the new end take off (NETO), formation of a protein complex that includes tea1, tea4 and for3 is necessary and sufficient for the establishment of cell polarity and localized actin assembly at new cell ends. This chain is Tip elongation aberrant protein Tea4, found in Schizosaccharomyces pombe (strain 972 / ATCC 24843) (Fission yeast).